The following is a 275-amino-acid chain: 3-oxo-isoapionate decarboxylase (275 aa).

The catalysed reaction is 3-oxoisoapionate + H(+) = L-erythrulose + CO2. It functions in the pathway carbohydrate metabolism. In terms of biological role, involved in catabolism of D-apiose. Catalyzes decarboxylation of 3-oxo-isoapionate to L-erythrulose. This Pectobacterium atrosepticum (strain SCRI 1043 / ATCC BAA-672) (Erwinia carotovora subsp. atroseptica) protein is 3-oxo-isoapionate decarboxylase.